Here is a 291-residue protein sequence, read N- to C-terminus: Ribosomal RNA small subunit methyltransferase A (291 aa).

Residues Asn28, Leu30, Gly55, Glu77, Asp103, and Asn123 each coordinate S-adenosyl-L-methionine.

Belongs to the class I-like SAM-binding methyltransferase superfamily. rRNA adenine N(6)-methyltransferase family. RsmA subfamily.

The protein localises to the cytoplasm. It catalyses the reaction adenosine(1518)/adenosine(1519) in 16S rRNA + 4 S-adenosyl-L-methionine = N(6)-dimethyladenosine(1518)/N(6)-dimethyladenosine(1519) in 16S rRNA + 4 S-adenosyl-L-homocysteine + 4 H(+). Functionally, specifically dimethylates two adjacent adenosines (A1518 and A1519) in the loop of a conserved hairpin near the 3'-end of 16S rRNA in the 30S particle. May play a critical role in biogenesis of 30S subunits. The sequence is that of Ribosomal RNA small subunit methyltransferase A from Azorhizobium caulinodans (strain ATCC 43989 / DSM 5975 / JCM 20966 / LMG 6465 / NBRC 14845 / NCIMB 13405 / ORS 571).